A 947-amino-acid chain; its full sequence is Bifunctional glutamine synthetase adenylyltransferase/adenylyl-removing enzyme (947 aa).

The adenylyl removase stretch occupies residues methionine 1 to glutamate 440. The tract at residues serine 450–valine 947 is adenylyl transferase.

It belongs to the GlnE family. It depends on Mg(2+) as a cofactor.

It catalyses the reaction [glutamine synthetase]-O(4)-(5'-adenylyl)-L-tyrosine + phosphate = [glutamine synthetase]-L-tyrosine + ADP. The enzyme catalyses [glutamine synthetase]-L-tyrosine + ATP = [glutamine synthetase]-O(4)-(5'-adenylyl)-L-tyrosine + diphosphate. Involved in the regulation of glutamine synthetase GlnA, a key enzyme in the process to assimilate ammonia. When cellular nitrogen levels are high, the C-terminal adenylyl transferase (AT) inactivates GlnA by covalent transfer of an adenylyl group from ATP to specific tyrosine residue of GlnA, thus reducing its activity. Conversely, when nitrogen levels are low, the N-terminal adenylyl removase (AR) activates GlnA by removing the adenylyl group by phosphorolysis, increasing its activity. The regulatory region of GlnE binds the signal transduction protein PII (GlnB) which indicates the nitrogen status of the cell. This chain is Bifunctional glutamine synthetase adenylyltransferase/adenylyl-removing enzyme, found in Salmonella paratyphi C (strain RKS4594).